The chain runs to 367 residues: tRNA-specific 2-thiouridylase MnmA (367 aa).

Residues 11 to 18 (AMSGGVDS) and M37 contribute to the ATP site. An interaction with target base in tRNA region spans residues 97–99 (NPD). The Nucleophile role is filled by C102. The cysteines at positions 102 and 199 are disulfide-linked. G127 lines the ATP pocket. An interaction with tRNA region spans residues 149-151 (KDQ). The active-site Cysteine persulfide intermediate is the C199. The interval 311–312 (RY) is interaction with tRNA.

The protein belongs to the MnmA/TRMU family. In terms of assembly, interacts with TusE.

It localises to the cytoplasm. The enzyme catalyses S-sulfanyl-L-cysteinyl-[protein] + uridine(34) in tRNA + AH2 + ATP = 2-thiouridine(34) in tRNA + L-cysteinyl-[protein] + A + AMP + diphosphate + H(+). In terms of biological role, catalyzes the 2-thiolation of uridine at the wobble position (U34) of tRNA(Lys), tRNA(Glu) and tRNA(Gln), leading to the formation of s(2)U34, the first step of tRNA-mnm(5)s(2)U34 synthesis. Sulfur is provided by IscS, via a sulfur-relay system. Binds ATP and its substrate tRNAs. The sequence is that of tRNA-specific 2-thiouridylase MnmA from Buchnera aphidicola subsp. Schizaphis graminum (strain Sg).